A 392-amino-acid polypeptide reads, in one-letter code: Heat-inducible transcription repressor HrcA (392 aa).

Belongs to the HrcA family.

Functionally, negative regulator of class I heat shock genes (grpE-dnaK-dnaJ and groELS operons). Prevents heat-shock induction of these operons. The sequence is that of Heat-inducible transcription repressor HrcA from Chlamydia trachomatis serovar A (strain ATCC VR-571B / DSM 19440 / HAR-13).